We begin with the raw amino-acid sequence, 24 residues long: VVNGKPTRTNVGRMVSLKYRNKHI.

As to quaternary structure, heterodimer of a heavy and a light chain linked by disulfide bond(s).

Its function is as follows. HPTA is an acidic heparin-binding growth factor for hepatocytes. The sequence is that of Heptapoietin A light chain from Oryctolagus cuniculus (Rabbit).